A 277-amino-acid chain; its full sequence is Large ribosomal subunit protein uL2 (277 aa).

The segment at 222-259 (GSVMNPNDHPHGGGEGKSPVGRPSPVTPWGKPALGYKT) is disordered.

The protein belongs to the universal ribosomal protein uL2 family. Part of the 50S ribosomal subunit. Forms a bridge to the 30S subunit in the 70S ribosome.

Its function is as follows. One of the primary rRNA binding proteins. Required for association of the 30S and 50S subunits to form the 70S ribosome, for tRNA binding and peptide bond formation. It has been suggested to have peptidyltransferase activity; this is somewhat controversial. Makes several contacts with the 16S rRNA in the 70S ribosome. This chain is Large ribosomal subunit protein uL2, found in Clostridium beijerinckii (strain ATCC 51743 / NCIMB 8052) (Clostridium acetobutylicum).